A 627-amino-acid chain; its full sequence is F-box only protein 21 (627 aa).

The F-box domain occupies Pro27–Gln76.

Directly interacts with SKP1 and CUL1.

Substrate-recognition component of the SCF (SKP1-CUL1-F-box protein)-type E3 ubiquitin ligase complex. This Mus musculus (Mouse) protein is F-box only protein 21 (Fbxo21).